We begin with the raw amino-acid sequence, 594 residues long: DEAD-box ATP-dependent RNA helicase 25 (594 aa).

Disordered regions lie at residues 56 to 80 (RSGG…EEGL) and 92 to 121 (GVRE…VDGS). A Q motif motif is present at residues 126-154 (TRFDQCTISPLSLKAVKDAGYERMTQVQE). Residues 157-340 (LPVILQGKDV…HIAMKKNYKF (184 aa)) enclose the Helicase ATP-binding domain. 170–177 (AKTGTGKT) serves as a coordination point for ATP. The DEAD box signature appears at 288-291 (DEAD). The Helicase C-terminal domain maps to 370–520 (ILYDVLKKHV…SVDSSTQTIV (151 aa)).

This sequence belongs to the DEAD box helicase family.

The catalysed reaction is ATP + H2O = ADP + phosphate + H(+). The polypeptide is DEAD-box ATP-dependent RNA helicase 25 (Oryza sativa subsp. japonica (Rice)).